The sequence spans 318 residues: Ribosomal RNA small subunit methyltransferase H (318 aa).

S-adenosyl-L-methionine contacts are provided by residues 37–39, Asp57, Phe83, Asp104, and Gln111; that span reads GGH.

It belongs to the methyltransferase superfamily. RsmH family.

The protein localises to the cytoplasm. It catalyses the reaction cytidine(1402) in 16S rRNA + S-adenosyl-L-methionine = N(4)-methylcytidine(1402) in 16S rRNA + S-adenosyl-L-homocysteine + H(+). Functionally, specifically methylates the N4 position of cytidine in position 1402 (C1402) of 16S rRNA. The chain is Ribosomal RNA small subunit methyltransferase H from Neisseria gonorrhoeae (strain NCCP11945).